The sequence spans 82 residues: Small ribosomal subunit protein bS16 (82 aa).

This sequence belongs to the bacterial ribosomal protein bS16 family.

In Vibrio campbellii (strain ATCC BAA-1116), this protein is Small ribosomal subunit protein bS16.